Reading from the N-terminus, the 1696-residue chain is Proprotein convertase subtilisin/kexin type 5 (1696 aa).

Positions 1–25 are cleaved as a signal peptide; sequence MPPAIVILALFTAALCAVNLRTVAA. A propeptide spanning residues 26–110 is cleaved from the precursor; it reads DGPRIYRNEW…QQVVKRRVKR (85 aa). The tract at residues 111–488 is catalytic; that stretch reads RVKRVYSMYP…GLMDAGKMVE (378 aa). Over 111–1618 the chain is Extracellular; that stretch reads RVKRVYSMYP…ADSIPTNVAY (1508 aa). The Peptidase S8 domain occupies 167 to 487; sequence QWSDMNVEAA…FGLMDAGKMV (321 aa). Residues aspartate 192 and histidine 233 each act as charge relay system in the active site. An N-linked (GlcNAc...) asparagine glycan is attached at asparagine 246. Serine 407 serves as the catalytic Charge relay system. Positions 495–638 constitute a P/Homo B domain; that stretch reads RVPEQHVCEE…KLILYGTAEH (144 aa). A glycan (N-linked (GlcNAc...) asparagine) is linked at asparagine 529. The span at 643-657 shows a compositional bias: basic and acidic residues; sequence RDEESRPHTPQTREE. Residues 643–666 form a disordered region; sequence RDEESRPHTPQTREEPTDEEECED. A CRM (Cys-rich motif) region spans residues 664-1649; it reads CEDGDYYDRS…LQARSNGRLC (986 aa). Asparagine 885 carries N-linked (GlcNAc...) asparagine glycosylation. The helical transmembrane segment at 1619-1639 threads the bilayer; it reads IAVATFICVVIVVLFFVVFGM. Residues 1640 to 1696 lie on the Cytoplasmic side of the membrane; it reads LQARSNGRLCWAHKYQQVPTTRYEKMNDHVNILSQEDFYNEDSLSEDEIHSIDSTRH.

The protein belongs to the peptidase S8 family.

The protein localises to the secreted. It is found in the cell membrane. Functionally, serine endoprotease that processes various proproteins by cleavage at paired basic amino acids, recognizing the RXXX[KR]R consensus motif. Likely functions in the constitutive and regulated secretory pathways. The sequence is that of Proprotein convertase subtilisin/kexin type 5 (PC6) from Branchiostoma californiense (California lancelet).